The sequence spans 317 residues: Acetyl-coenzyme A carboxylase carboxyl transferase subunit alpha (317 aa).

In terms of domain architecture, CoA carboxyltransferase C-terminal spans 40–294 (RLQKKSEELT…KQQILADLQD (255 aa)).

This sequence belongs to the AccA family. Acetyl-CoA carboxylase is a heterohexamer composed of biotin carboxyl carrier protein (AccB), biotin carboxylase (AccC) and two subunits each of ACCase subunit alpha (AccA) and ACCase subunit beta (AccD).

The protein resides in the cytoplasm. The catalysed reaction is N(6)-carboxybiotinyl-L-lysyl-[protein] + acetyl-CoA = N(6)-biotinyl-L-lysyl-[protein] + malonyl-CoA. Its pathway is lipid metabolism; malonyl-CoA biosynthesis; malonyl-CoA from acetyl-CoA: step 1/1. Functionally, component of the acetyl coenzyme A carboxylase (ACC) complex. First, biotin carboxylase catalyzes the carboxylation of biotin on its carrier protein (BCCP) and then the CO(2) group is transferred by the carboxyltransferase to acetyl-CoA to form malonyl-CoA. The chain is Acetyl-coenzyme A carboxylase carboxyl transferase subunit alpha from Actinobacillus pleuropneumoniae serotype 5b (strain L20).